The primary structure comprises 460 residues: Probable amino acid transporter skat-1 (460 aa).

The next 10 membrane-spanning stretches (helical) occupy residues 64–84 (LGGL…NWYG), 132–152 (FVNV…ILFI), 172–192 (MILM…FTEM), 194–214 (IVSF…AVIM), 236–256 (TITM…ILPI), 270–290 (FGVL…LGFF), 316–336 (VNVF…YVVY), 362–382 (GFRV…PKLE), 383–403 (IMIP…FPPF), and 426–446 (IFIN…GVYT).

It belongs to the amino acid/polyamine transporter 2 family. In terms of tissue distribution, expressed in the head, tail, body and ventral nerve cord neurons, muscles of the vulva, and intestine.

The protein localises to the membrane. The protein resides in the cytoplasmic granule. Functionally, plays a role in the accumulation of vital dyes and endogenous fluorescent compounds in lysosome related organelles. Has an effect on lysosome related organelle (LRO) function, in a pathway with serotonin. This Caenorhabditis elegans protein is Probable amino acid transporter skat-1.